A 437-amino-acid chain; its full sequence is Probable indole-3-pyruvate monooxygenase YUCCA3 (437 aa).

41–46 (GAGPSG) contributes to the FAD binding site. 212-217 (GCGNSG) contacts NADP(+).

The protein belongs to the FMO family. FAD serves as cofactor.

The catalysed reaction is indole-3-pyruvate + NADPH + O2 + H(+) = (indol-3-yl)acetate + CO2 + NADP(+) + H2O. The protein operates within plant hormone metabolism; auxin biosynthesis. Functionally, involved in auxin biosynthesis. Belongs to the set of redundant YUCCA genes probably responsible for auxin biosynthesis in roots. In Arabidopsis thaliana (Mouse-ear cress), this protein is Probable indole-3-pyruvate monooxygenase YUCCA3 (YUC3).